The following is a 36-amino-acid chain: Toxin Iob1 (36 aa).

3 disulfides stabilise this stretch: Cys6/Cys21, Cys13/Cys26, and Cys20/Cys33.

Its subcellular location is the secreted. Functionally, binds reversibly and blocks N-type voltage-gated calcium channels (Cav). This Isyndus obscurus (Assassin bug) protein is Toxin Iob1.